A 269-amino-acid polypeptide reads, in one-letter code: Calretinin (269 aa).

EF-hand domains are found at residues 14-49 (LSAS…LESA), 61-96 (SLGD…EENF), 105-140 (GSSS…LLKK), 149-184 (KLQE…QENF), 193-228 (LSSE…LYEK), and 230-265 (KKEM…VLCS). Aspartate 27, aspartate 29, asparagine 31, tyrosine 33, glutamate 38, aspartate 74, asparagine 76, aspartate 78, lysine 80, glutamate 85, aspartate 118, aspartate 120, serine 122, tyrosine 124, glutamate 129, aspartate 162, asparagine 164, aspartate 166, lysine 168, glutamate 173, aspartate 206, aspartate 208, serine 210, and glutamate 217 together coordinate Ca(2+).

Belongs to the calbindin family.

It localises to the synapse. It is found in the cell projection. The protein resides in the dendrite. Functionally, calcium-binding protein involved in calcium homeostasis and signal transduction. It plays a critical role in buffering intracellular calcium levels and modulating calcium-dependent signaling pathways. Predominantly expressed in specific neuronal populations, influences synaptic plasticity and neuronal excitability, contributing to learning and memory. During embryonic development, it facilitates neuronal differentiation and maturation. This Gallus gallus (Chicken) protein is Calretinin (CALB2).